Here is a 390-residue protein sequence, read N- to C-terminus: Phosphopentomutase (390 aa).

Mn(2+) contacts are provided by D10, D282, H287, D323, H324, and H335.

This sequence belongs to the phosphopentomutase family. The cofactor is Mn(2+).

Its subcellular location is the cytoplasm. The catalysed reaction is 2-deoxy-alpha-D-ribose 1-phosphate = 2-deoxy-D-ribose 5-phosphate. It carries out the reaction alpha-D-ribose 1-phosphate = D-ribose 5-phosphate. Its pathway is carbohydrate degradation; 2-deoxy-D-ribose 1-phosphate degradation; D-glyceraldehyde 3-phosphate and acetaldehyde from 2-deoxy-alpha-D-ribose 1-phosphate: step 1/2. Isomerase that catalyzes the conversion of deoxy-ribose 1-phosphate (dRib-1-P) and ribose 1-phosphate (Rib-1-P) to deoxy-ribose 5-phosphate (dRib-5-P) and ribose 5-phosphate (Rib-5-P), respectively. The protein is Phosphopentomutase of Lachnoclostridium phytofermentans (strain ATCC 700394 / DSM 18823 / ISDg) (Clostridium phytofermentans).